The primary structure comprises 140 residues: Large ribosomal subunit protein uL11 (140 aa).

This sequence belongs to the universal ribosomal protein uL11 family. As to quaternary structure, part of the ribosomal stalk of the 50S ribosomal subunit. Interacts with L10 and the large rRNA to form the base of the stalk. L10 forms an elongated spine to which L12 dimers bind in a sequential fashion forming a multimeric L10(L12)X complex. One or more lysine residues are methylated.

In terms of biological role, forms part of the ribosomal stalk which helps the ribosome interact with GTP-bound translation factors. The chain is Large ribosomal subunit protein uL11 from Staphylococcus aureus (strain Mu3 / ATCC 700698).